Here is a 171-residue protein sequence, read N- to C-terminus: LIM domain transcription factor LMO4-B (171 aa).

A compositionally biased stretch (polar residues) spans 1-19 (MVNNRISESTTTAVSNNGS). The tract at residues 1–20 (MVNNRISESTTTAVSNNGSP) is disordered. 2 consecutive LIM zinc-binding domains span residues 22–84 (KACA…LFGN) and 86–148 (GACN…GLLN).

Functionally, acts as a positive cofactor of GATA transcription factors to establish the identity of the ventral mesoderm during gastrulation. Down-regulation in the dorsal mesoderm is necessary for the proper formation of this territory since, when present, lmo4 may bind ldb1 and restrict the availability of this cofactor for Spemman organizer transcription factors. At neurula stages, suppresses primary neuron differentiation and modulates gene expression at the Isthmic Organizer of the midbrain-hindbrain boundary. This chain is LIM domain transcription factor LMO4-B (lmo4-b), found in Xenopus laevis (African clawed frog).